The chain runs to 115 residues: Large ribosomal subunit protein bL19 (115 aa).

It belongs to the bacterial ribosomal protein bL19 family.

Functionally, this protein is located at the 30S-50S ribosomal subunit interface and may play a role in the structure and function of the aminoacyl-tRNA binding site. This Thermotoga maritima (strain ATCC 43589 / DSM 3109 / JCM 10099 / NBRC 100826 / MSB8) protein is Large ribosomal subunit protein bL19 (rplS).